A 259-amino-acid chain; its full sequence is MSLQPAPASRVFMELVPWADRGRENHPISAAEAQPIGRRPHVAEAHPGAREVHVSGAAEVSASPDRALVTVRVSSTKEVSAEAKKSVCRRLDYITQSLQQQGFQAENVTVTKNIRRVENAYHMEAEVCITFTEFGKMQNICNFLVEKLDSSVVISPPEFYHTPGSVENLRRQACLVAVENAWRKAQEVCDLVGQTLGKPLLIKEEETKDWEGQTDDHQLSRLPGTLTVQQKIKSATIHAASKVFITFEVKGKEKKKKHL.

Residues S55, S61, S63, and S234 each carry the phosphoserine modification. T236 is subject to Phosphothreonine. Positions 239-259 (AASKVFITFEVKGKEKKKKHL) are required for nuclear localization (NLS). S241 is modified (phosphoserine). A Phosphothreonine modification is found at T246.

The protein belongs to the IRAK1BP1 family. Interacts with IRAK1 and RELA. Interacts with HSPA8 and HSPA1. May interact with Listeria monocytogenes actA. Post-translationally, phosphorylation at Ser-55, Ser-61 and/or Ser-63 is required for full activity. Phosphorylated on at least one of Ser-234, Thr-236, Ser-241 and Thr-246 upon TNF-alpha activation, which favors nuclear translocation. Expressed in testis, brain, kidney, liver and heart.

It localises to the cytoplasm. The protein localises to the nucleus. Component of the IRAK1-dependent TNFRSF1A signaling pathway that leads to NF-kappa-B activation and is required for cell survival. Acts by enhancing RELA transcriptional activity. This Mus musculus (Mouse) protein is Interleukin-1 receptor-associated kinase 1-binding protein 1 (Irak1bp1).